The following is a 480-amino-acid chain: Immune evasion protein OPG047 (480 aa).

Residues C10–S90 enclose the BTB domain. Residues C125–N223 enclose the BACK domain. 5 Kelch repeats span residues V273–N319, K320–N363, I365–R408, L410–N447, and K448–K480.

Belongs to the orthopoxvirus OPG047 family.

Functionally, might have a role in the suppression of host immune response. In Vaccinia virus (strain Copenhagen) (VACV), this protein is Immune evasion protein OPG047 (OPG047).